The primary structure comprises 70 residues: Putative peptide YY-3 (70 aa).

Residues 1–23 form the signal peptide; the sequence is MVSVCRPWPAVAIALLALLVCLG.

It belongs to the NPY family.

Its subcellular location is the secreted. The chain is Putative peptide YY-3 (PYY3) from Homo sapiens (Human).